The primary structure comprises 496 residues: 7,8-epoxymelianol synthase CYP88A154 (496 aa).

Residues 11 to 31 (FNFLWLILAIFVGTYVVLFGF) traverse the membrane as a helical segment. C444 is a heme binding site.

The protein belongs to the cytochrome P450 family. Heme is required as a cofactor.

The protein resides in the membrane. The catalysed reaction is melianol + reduced [NADPH--hemoprotein reductase] + O2 = 7,8-epoxymelianol + oxidized [NADPH--hemoprotein reductase] + H2O + H(+). It functions in the pathway secondary metabolite biosynthesis; terpenoid biosynthesis. Monooxygenase involved in the biosynthesis of glabretanes, limonoids and quassinoids triterpene natural products such as ailanthone, chaparrinone, glaucarubinone and amarolide, allelopathic degraded triterpene lactones inhibiting the growth of other plants, and possessing antimalarial, antifeedant, insecticidal, anti-inflammatory and anticancer activities. Catalyzes the epoxidation of melianol to produce 7,8-epoxymelianol. This Ailanthus altissima (Tree-of-heaven) protein is 7,8-epoxymelianol synthase CYP88A154.